Consider the following 480-residue polypeptide: uncharacterized protein (480 aa).

Residue K222 is modified to N6-(pyridoxal phosphate)lysine.

This sequence belongs to the Orn/Lys/Arg decarboxylase class-I family. It depends on pyridoxal 5'-phosphate as a cofactor.

This is an uncharacterized protein from Bacillus subtilis (strain 168).